The following is a 162-amino-acid chain: Phosphopantetheine adenylyltransferase (162 aa).

Thr10 is a substrate binding site. ATP contacts are provided by residues 10-11 (TF) and His18. Substrate is bound by residues Lys42, Leu74, and Arg88. Residues 89-91 (GLR), Glu99, and 124-130 (FSCISST) contribute to the ATP site.

Belongs to the bacterial CoaD family. Homohexamer. It depends on Mg(2+) as a cofactor.

It is found in the cytoplasm. The enzyme catalyses (R)-4'-phosphopantetheine + ATP + H(+) = 3'-dephospho-CoA + diphosphate. It participates in cofactor biosynthesis; coenzyme A biosynthesis; CoA from (R)-pantothenate: step 4/5. In terms of biological role, reversibly transfers an adenylyl group from ATP to 4'-phosphopantetheine, yielding dephospho-CoA (dPCoA) and pyrophosphate. This is Phosphopantetheine adenylyltransferase from Francisella tularensis subsp. novicida (strain U112).